A 639-amino-acid chain; its full sequence is Putative oxidoreductase UacF (639 aa).

5 consecutive 4Fe-4S ferredoxin-type domains span residues 3–32 (KFIA…ENWP), 47–77 (KGQA…TFQS), 78–107 (DSVQ…MVDT), 110–139 (QKCD…LMDD), and 201–235 (QQAT…YIRL). Residues C12, C15, C18, C22, C56, C59, C64, C68, C87, C90, C93, C97, C112, C115, C125, C129, C210, C213, C219, and C223 each coordinate [4Fe-4S] cluster.

[4Fe-4S] cluster is required as a cofactor.

Functionally, involved in formate-dependent uric acid degradation under microaerobic and anaerobic conditions. May reduce the enzymes necessary for uric acid degradation. In Escherichia coli (strain K12), this protein is Putative oxidoreductase UacF.